The chain runs to 94 residues: Small ribosomal subunit protein uS19 (94 aa).

The tract at residues 73–94 (EFSPTRRFGGHADKKSKKGQVK) is disordered.

Belongs to the universal ribosomal protein uS19 family.

Its function is as follows. Protein S19 forms a complex with S13 that binds strongly to the 16S ribosomal RNA. The chain is Small ribosomal subunit protein uS19 from Kosmotoga olearia (strain ATCC BAA-1733 / DSM 21960 / TBF 19.5.1).